Here is a 108-residue protein sequence, read N- to C-terminus: Large ribosomal subunit protein uL24 (108 aa).

It belongs to the universal ribosomal protein uL24 family. Part of the 50S ribosomal subunit.

Functionally, one of two assembly initiator proteins, it binds directly to the 5'-end of the 23S rRNA, where it nucleates assembly of the 50S subunit. In terms of biological role, one of the proteins that surrounds the polypeptide exit tunnel on the outside of the subunit. The chain is Large ribosomal subunit protein uL24 from Salinispora tropica (strain ATCC BAA-916 / DSM 44818 / JCM 13857 / NBRC 105044 / CNB-440).